A 179-amino-acid chain; its full sequence is MARLNELYNKELVPQLMKDFNYRNIMQVPKLEKIVINMGLGEAIQNVKILDSAVSEMALIAGQKPVITKAKKSIAGFKLRQGMPIGCAVTLRREKMYEFLDRLINVSLPRVRDFKGISGKGFDGKGNYSLGVKEQLIFPEIDYDKIDKIKGLNITIVTSAKNDEEGKALLKLMGMPFRN.

It belongs to the universal ribosomal protein uL5 family. Part of the 50S ribosomal subunit; part of the 5S rRNA/L5/L18/L25 subcomplex. Contacts the 5S rRNA and the P site tRNA. Forms a bridge to the 30S subunit in the 70S ribosome.

Functionally, this is one of the proteins that bind and probably mediate the attachment of the 5S RNA into the large ribosomal subunit, where it forms part of the central protuberance. In the 70S ribosome it contacts protein S13 of the 30S subunit (bridge B1b), connecting the 2 subunits; this bridge is implicated in subunit movement. Contacts the P site tRNA; the 5S rRNA and some of its associated proteins might help stabilize positioning of ribosome-bound tRNAs. This chain is Large ribosomal subunit protein uL5, found in Geotalea daltonii (strain DSM 22248 / JCM 15807 / FRC-32) (Geobacter daltonii).